Here is a 92-residue protein sequence, read N- to C-terminus: Small ribosomal subunit protein bS20 (92 aa).

Residues 1-22 (MANSPQSKKRARQAEARAAVNK) are disordered.

It belongs to the bacterial ribosomal protein bS20 family.

Binds directly to 16S ribosomal RNA. The sequence is that of Small ribosomal subunit protein bS20 from Cereibacter sphaeroides (strain ATCC 17029 / ATH 2.4.9) (Rhodobacter sphaeroides).